The primary structure comprises 283 residues: Homeobox protein Hox-A9a (283 aa).

Disordered regions lie at residues 25–54 (VPRY…GTCS) and 162–181 (EKDA…EKPG). A DNA-binding region (homeobox) is located at residues 216-275 (TRKKRCPYTKHQILELEKEFLFNTYLTRDRRYEVARLLNLTERQVKIWFQNRRMKMKKFN).

Belongs to the Abd-B homeobox family.

The protein localises to the nucleus. In terms of biological role, sequence-specific transcription factor which is part of a developmental regulatory system that provides cells with specific positional identities on the anterior-posterior axis. The chain is Homeobox protein Hox-A9a (hoxa9a) from Takifugu rubripes (Japanese pufferfish).